The chain runs to 150 residues: MLGAALRRCAVAATTWAGPRGLLHSARTPGPAAAIQSVRCYSHGSHETDEEFDARWVTYFNKPDIDAWELRKGINTLVTYDLVPEPKIIDAALRACRRLNDFASTVRILEAVKDKAGPHKEIYPYVIQELRPTLNELGISTPEELGLDKV.

Residues 1-41 (MLGAALRRCAVAATTWAGPRGLLHSARTPGPAAAIQSVRCY) constitute a mitochondrion transit peptide. The short motif at 2–20 (LGAALRRCAVAATTWAGPR) is the SIFI-degron element. An N6-acetyllysine mark is found at Lys-87 and Lys-113. At Thr-141 the chain carries Phosphothreonine.

The protein belongs to the cytochrome c oxidase subunit 5A family. As to quaternary structure, component of the cytochrome c oxidase (complex IV, CIV), a multisubunit enzyme composed of 14 subunits. The complex is composed of a catalytic core of 3 subunits MT-CO1, MT-CO2 and MT-CO3, encoded in the mitochondrial DNA, and 11 supernumerary subunits COX4I, COX5A, COX5B, COX6A, COX6B, COX6C, COX7A, COX7B, COX7C, COX8 and NDUFA4, which are encoded in the nuclear genome. The complex exists as a monomer or a dimer and forms supercomplexes (SCs) in the inner mitochondrial membrane with NADH-ubiquinone oxidoreductase (complex I, CI) and ubiquinol-cytochrome c oxidoreductase (cytochrome b-c1 complex, complex III, CIII), resulting in different assemblies (supercomplex SCI(1)III(2)IV(1) and megacomplex MCI(2)III(2)IV(2)). Interacts with AFG1L. Interacts with RAB5IF. In terms of processing, in response to mitochondrial stress, the precursor protein is ubiquitinated by the SIFI complex in the cytoplasm before mitochondrial import, leading to its degradation. Within the SIFI complex, UBR4 initiates ubiquitin chain that are further elongated or branched by KCMF1.

The protein localises to the mitochondrion inner membrane. It participates in energy metabolism; oxidative phosphorylation. Its function is as follows. Component of the cytochrome c oxidase, the last enzyme in the mitochondrial electron transport chain which drives oxidative phosphorylation. The respiratory chain contains 3 multisubunit complexes succinate dehydrogenase (complex II, CII), ubiquinol-cytochrome c oxidoreductase (cytochrome b-c1 complex, complex III, CIII) and cytochrome c oxidase (complex IV, CIV), that cooperate to transfer electrons derived from NADH and succinate to molecular oxygen, creating an electrochemical gradient over the inner membrane that drives transmembrane transport and the ATP synthase. Cytochrome c oxidase is the component of the respiratory chain that catalyzes the reduction of oxygen to water. Electrons originating from reduced cytochrome c in the intermembrane space (IMS) are transferred via the dinuclear copper A center (CU(A)) of subunit 2 and heme A of subunit 1 to the active site in subunit 1, a binuclear center (BNC) formed by heme A3 and copper B (CU(B)). The BNC reduces molecular oxygen to 2 water molecules using 4 electrons from cytochrome c in the IMS and 4 protons from the mitochondrial matrix. This is Cytochrome c oxidase subunit 5A, mitochondrial (COX5A) from Macaca mulatta (Rhesus macaque).